Reading from the N-terminus, the 379-residue chain is UDP-4-amino-4-deoxy-L-arabinose--oxoglutarate aminotransferase (379 aa).

K182 bears the N6-(pyridoxal phosphate)lysine mark.

The protein belongs to the DegT/DnrJ/EryC1 family. ArnB subfamily. Homodimer. Pyridoxal 5'-phosphate serves as cofactor.

The catalysed reaction is UDP-4-amino-4-deoxy-beta-L-arabinose + 2-oxoglutarate = UDP-beta-L-threo-pentopyranos-4-ulose + L-glutamate. It functions in the pathway nucleotide-sugar biosynthesis; UDP-4-deoxy-4-formamido-beta-L-arabinose biosynthesis; UDP-4-deoxy-4-formamido-beta-L-arabinose from UDP-alpha-D-glucuronate: step 2/3. It participates in bacterial outer membrane biogenesis; lipopolysaccharide biosynthesis. In terms of biological role, catalyzes the conversion of UDP-4-keto-arabinose (UDP-Ara4O) to UDP-4-amino-4-deoxy-L-arabinose (UDP-L-Ara4N). The modified arabinose is attached to lipid A and is required for resistance to polymyxin and cationic antimicrobial peptides. This is UDP-4-amino-4-deoxy-L-arabinose--oxoglutarate aminotransferase from Escherichia coli O7:K1 (strain IAI39 / ExPEC).